The chain runs to 139 residues: Endoribonuclease YbeY (139 aa).

Zn(2+)-binding residues include His107, His111, and Asp117.

It belongs to the endoribonuclease YbeY family. Zn(2+) is required as a cofactor.

The protein resides in the cytoplasm. Functionally, single strand-specific metallo-endoribonuclease involved in late-stage 70S ribosome quality control and in maturation of the 3' terminus of the 16S rRNA. In Bacteroides fragilis (strain ATCC 25285 / DSM 2151 / CCUG 4856 / JCM 11019 / LMG 10263 / NCTC 9343 / Onslow / VPI 2553 / EN-2), this protein is Endoribonuclease YbeY.